The chain runs to 334 residues: Serine racemase (334 aa).

Glu-13 contributes to the Mg(2+) binding site. The ATP site is built by Ser-31, Ser-32, Ile-33, Lys-51, and Thr-52. Active-site proton acceptor residues include Lys-56 and Ser-84. Residue Lys-56 is modified to N6-(pyridoxal phosphate)lysine. Asn-86 is a binding site for pyridoxal 5'-phosphate. Gln-89 is an ATP binding site. Cys-113 carries the post-translational modification S-nitrosocysteine. Tyr-121 contributes to the ATP binding site. Position 154 (Asn-154) interacts with pyridoxal 5'-phosphate. Residue Asp-178 participates in Mg(2+) binding. Gly-185, Gly-186, Gly-187, Gly-188, and Met-189 together coordinate pyridoxal 5'-phosphate. 4 residues coordinate Mg(2+): Glu-210, Ala-214, Asp-216, and Asn-247. Glu-210, Ala-214, Asp-216, and Asn-247 together coordinate Ca(2+). Mn(2+)-binding residues include Glu-210, Ala-214, and Asp-216. Position 279 (Lys-279) interacts with ATP. Ser-313 is a binding site for pyridoxal 5'-phosphate. Residue Asn-316 participates in ATP binding.

Belongs to the serine/threonine dehydratase family. Homodimer. The cofactor is Mg(2+). Requires Mn(2+) as cofactor. It depends on Ca(2+) as a cofactor. Pyridoxal 5'-phosphate is required as a cofactor. In terms of processing, S-nitrosylated, leading to decrease the enzyme activity.

The enzyme catalyses L-serine = D-serine. It catalyses the reaction L-serine = pyruvate + NH4(+). The catalysed reaction is D-serine = pyruvate + NH4(+). In terms of biological role, catalyzes the synthesis of D-serine from L-serine. D-serine is a key coagonist with glutamate at NMDA receptors. Has dehydratase activity towards both L-serine and D-serine. The protein is Serine racemase (SRR) of Bos taurus (Bovine).